The following is a 206-amino-acid chain: Two-component response regulator ARR15 (206 aa).

Positions 19–146 (HVLAVDDSFV…DVKRLKELIM (128 aa)) constitute a Response regulatory domain. A 4-aspartylphosphate modification is found at aspartate 79. Positions 151-206 (AEEGKTKKLSPKRILQNDIDSSPSSSSTSSSSSSHDVSSLDDDTPSSKRIKLESRG) are disordered. The span at 168-187 (DIDSSPSSSSTSSSSSSHDV) shows a compositional bias: low complexity.

It belongs to the ARR family. Type-A subfamily. Post-translationally, two-component system major event consists of a His-to-Asp phosphorelay between a sensor histidine kinase (HK) and a response regulator (RR). In plants, the His-to-Asp phosphorelay involves an additional intermediate named Histidine-containing phosphotransfer protein (HPt). This multistep phosphorelay consists of a His-Asp-His-Asp sequential transfer of a phosphate group between first a His and an Asp of the HK protein, followed by the transfer to a conserved His of the HPt protein and finally the transfer to an Asp in the receiver domain of the RR protein.

It localises to the nucleus. In terms of biological role, functions as a response regulator involved in His-to-Asp phosphorelay signal transduction system. Phosphorylation of the Asp residue in the receiver domain activates the ability of the protein to promote the transcription of target genes. Type-A response regulators seem to act as negative regulators of the cytokinin signaling. This chain is Two-component response regulator ARR15 (ARR15), found in Arabidopsis thaliana (Mouse-ear cress).